The primary structure comprises 442 residues: Phosphoglucosamine mutase (442 aa).

The active-site Phosphoserine intermediate is serine 103. Residues serine 103, aspartate 241, aspartate 243, and aspartate 245 each contribute to the Mg(2+) site. A Phosphoserine modification is found at serine 103.

The protein belongs to the phosphohexose mutase family. Mg(2+) serves as cofactor. Post-translationally, activated by phosphorylation.

The catalysed reaction is alpha-D-glucosamine 1-phosphate = D-glucosamine 6-phosphate. Catalyzes the conversion of glucosamine-6-phosphate to glucosamine-1-phosphate. In Deinococcus deserti (strain DSM 17065 / CIP 109153 / LMG 22923 / VCD115), this protein is Phosphoglucosamine mutase.